We begin with the raw amino-acid sequence, 458 residues long: Fasciclin-like arabinogalactan protein 17 (458 aa).

Residues 1–30 form the signal peptide; the sequence is MDRRIYGGSAVIHLFLFFSVLIFSAASALS. Residues 43-184 form the FAS1 1 domain; it reads NSNSVLVALL…GLIHGIERLL (142 aa). N-linked (GlcNAc...) asparagine glycosylation is present at N80. The segment at 207-262 is disordered; sequence PEGAPEVDPRTNRLKKPAAPVPAGSPPALPIQSAMAPGPSLAPAPAPGPGGKQHHF. Over residues 225–235 the composition is skewed to pro residues; the sequence is APVPAGSPPAL. An FAS1 2 domain is found at 268-411; it reads VKDFIHTLLH…ISVQGIDGVL (144 aa). N-linked (GlcNAc...) asparagine glycosylation is present at N290.

It belongs to the fasciclin-like AGP family.

It is found in the secreted. Its function is as follows. May be a cell surface adhesion protein. This Arabidopsis thaliana (Mouse-ear cress) protein is Fasciclin-like arabinogalactan protein 17 (FLA17).